Consider the following 384-residue polypeptide: Cytochrome b (384 aa).

Transmembrane regions (helical) follow at residues 32 to 52, 76 to 98, 113 to 133, and 179 to 199; these read FGSL…FLAM, WLLR…LHMA, LWNM…MGYC, and FFSL…LHLL. Positions 82 and 96 each coordinate heme b. Residues His183 and His197 each contribute to the heme b site. His202 serves as a coordination point for a ubiquinone. Transmembrane regions (helical) follow at residues 225 to 245, 289 to 309, 321 to 341, and 348 to 368; these read FLFK…FLIS, MMGV…PFVD, LSKI…LIGA, and YIII…ILLP.

The protein belongs to the cytochrome b family. As to quaternary structure, fungal cytochrome b-c1 complex contains 10 subunits; 3 respiratory subunits, 2 core proteins and 5 low-molecular weight proteins. Cytochrome b-c1 complex is a homodimer. Heme b serves as cofactor.

The protein localises to the mitochondrion inner membrane. Its function is as follows. Component of the ubiquinol-cytochrome c reductase complex (complex III or cytochrome b-c1 complex) that is part of the mitochondrial respiratory chain. The b-c1 complex mediates electron transfer from ubiquinol to cytochrome c. Contributes to the generation of a proton gradient across the mitochondrial membrane that is then used for ATP synthesis. The polypeptide is Cytochrome b (COB) (Starmerella bacillaris (Yeast)).